The primary structure comprises 292 residues: NAD kinase (292 aa).

Catalysis depends on aspartate 73, which acts as the Proton acceptor. NAD(+) contacts are provided by residues 73 to 74, 147 to 148, histidine 158, arginine 175, aspartate 177, 188 to 193, and glutamine 247; these read DG, NE, and TAYSLS.

Belongs to the NAD kinase family. It depends on a divalent metal cation as a cofactor.

Its subcellular location is the cytoplasm. It catalyses the reaction NAD(+) + ATP = ADP + NADP(+) + H(+). Its function is as follows. Involved in the regulation of the intracellular balance of NAD and NADP, and is a key enzyme in the biosynthesis of NADP. Catalyzes specifically the phosphorylation on 2'-hydroxyl of the adenosine moiety of NAD to yield NADP. The polypeptide is NAD kinase (Escherichia coli (strain UTI89 / UPEC)).